Reading from the N-terminus, the 98-residue chain is Cystatin-B (98 aa).

Position 1 is an N-acetylmethionine (Met-1). Positions 46-50 match the Secondary area of contact motif; sequence QLVAG.

This sequence belongs to the cystatin family. As to quaternary structure, able to form dimers stabilized by noncovalent forces.

Its subcellular location is the cytoplasm. Its function is as follows. This is an intracellular thiol proteinase inhibitor. The chain is Cystatin-B (CSTB) from Ovis aries (Sheep).